Here is a 145-residue protein sequence, read N- to C-terminus: Protein BUD31 homolog 3 (145 aa).

This sequence belongs to the BUD31 (G10) family.

It localises to the nucleus. This Oryza sativa subsp. japonica (Rice) protein is Protein BUD31 homolog 3.